The sequence spans 105 residues: Putative thioredoxin-5 (105 aa).

Positions 1 to 104 (MYKEPKNESE…VALENMVKKL (104 aa)) constitute a Thioredoxin domain. Active-site nucleophile residues include cysteine 30 and cysteine 33. Cysteine 30 and cysteine 33 are joined by a disulfide.

The protein belongs to the thioredoxin family.

Its function is as follows. Participates in various redox reactions through the reversible oxidation of its active center dithiol to a disulfide and catalyzes dithiol-disulfide exchange reactions. In Dictyostelium discoideum (Social amoeba), this protein is Putative thioredoxin-5 (trxE).